A 456-amino-acid polypeptide reads, in one-letter code: uncharacterized protein (456 aa).

Composition is skewed to basic and acidic residues over residues 181–210 (DQRKESIVNDERKKNPEFREKPDKNEDKKV) and 217–231 (KEIENKGIDHEENEE). Residues 181–231 (DQRKESIVNDERKKNPEFREKPDKNEDKKVKPPPSLKEIENKGIDHEENEE) form a disordered region. Positions 216 to 248 (LKEIENKGIDHEENEEDKKRELMFKLQLLQKQY) form a coiled coil. The chain crosses the membrane as a helical span at residues 347–365 (LALAILFNAVWFIAAKMIM). Residues 383–407 (NKSGTTPNSVSPRTWGNSKSPQSEF) are compositionally biased toward polar residues. The segment at 383–456 (NKSGTTPNSV…MREQGIETLK (74 aa)) is disordered. Residues 441-456 (DESRREMREQGIETLK) are compositionally biased toward basic and acidic residues.

It belongs to the IIV-6 067R family.

It localises to the membrane. This is an uncharacterized protein from Invertebrate iridescent virus 6 (IIV-6).